We begin with the raw amino-acid sequence, 508 residues long: Photosystem II CP47 reaction center protein (508 aa).

Helical transmembrane passes span 21-36 (SVHI…WAGS), 101-115 (IAFS…IWHW), 140-156 (GIHL…FGAF), 203-218 (IAAG…FHLS), 237-252 (VLSS…AFVV), and 457-472 (SFAL…HGAR).

This sequence belongs to the PsbB/PsbC family. PsbB subfamily. In terms of assembly, PSII is composed of 1 copy each of membrane proteins PsbA, PsbB, PsbC, PsbD, PsbE, PsbF, PsbH, PsbI, PsbJ, PsbK, PsbL, PsbM, PsbT, PsbX, PsbY, PsbZ, Psb30/Ycf12, at least 3 peripheral proteins of the oxygen-evolving complex and a large number of cofactors. It forms dimeric complexes. Requires Binds multiple chlorophylls. PSII binds additional chlorophylls, carotenoids and specific lipids. as cofactor.

It is found in the plastid membrane. In terms of biological role, one of the components of the core complex of photosystem II (PSII). It binds chlorophyll and helps catalyze the primary light-induced photochemical processes of PSII. PSII is a light-driven water:plastoquinone oxidoreductase, using light energy to abstract electrons from H(2)O, generating O(2) and a proton gradient subsequently used for ATP formation. This Cuscuta reflexa (Southern Asian dodder) protein is Photosystem II CP47 reaction center protein.